The primary structure comprises 207 residues: Putative 3-methyladenine DNA glycosylase (207 aa).

Positions 182-193 (PAPAGARAARAP) are enriched in low complexity. Positions 182-207 (PAPAGARAARAPAPAPRPRRPRGSGP) are disordered. Basic residues predominate over residues 198 to 207 (RPRRPRGSGP).

The protein belongs to the DNA glycosylase MPG family.

The chain is Putative 3-methyladenine DNA glycosylase from Anaeromyxobacter dehalogenans (strain 2CP-C).